Reading from the N-terminus, the 329-residue chain is Putative HTH-type transcriptional regulatory protein APE_0778 (329 aa).

Residues 142–200 enclose the HTH cro/C1-type domain; sequence LREKRLEKGLSLGHLAYMLKTSRKSIYEYERGVMSPSVEKAEKLVDILGEEILEPIDIL. The segment at residues 153-172 is a DNA-binding region (H-T-H motif); the sequence is LGHLAYMLKTSRKSIYEYER.

In Aeropyrum pernix (strain ATCC 700893 / DSM 11879 / JCM 9820 / NBRC 100138 / K1), this protein is Putative HTH-type transcriptional regulatory protein APE_0778.